We begin with the raw amino-acid sequence, 148 residues long: Ponticulin-like protein D (148 aa).

The signal sequence occupies residues 1 to 20 (MLLNKSLLLLVAFVFAIVSA). Asparagine 67 carries an N-linked (GlcNAc...) asparagine glycan. Aspartate 125 carries GPI-like-anchor amidated aspartate lipidation. The propeptide at 126 to 148 (SSAAATMIASFSAILIALLFALL) is removed in mature form.

Belongs to the ponticulin family. In terms of processing, the GPI-like-anchor contains a phosphoceramide group, rather than a phosphatidyl group.

The protein resides in the cell membrane. This is Ponticulin-like protein D (ponD) from Dictyostelium discoideum (Social amoeba).